We begin with the raw amino-acid sequence, 20 residues long: Peroxidase 1 (20 aa).

Heme is bound at residue His14. Thr15 provides a ligand contact to Ca(2+).

Belongs to the peroxidase family. Classical plant (class III) peroxidase subfamily. It depends on Ca(2+) as a cofactor. Heme b serves as cofactor.

Its subcellular location is the secreted. It carries out the reaction 2 a phenolic donor + H2O2 = 2 a phenolic radical donor + 2 H2O. Removal of H(2)O(2), oxidation of toxic reductants, biosynthesis and degradation of lignin, suberization, auxin catabolism, response to environmental stresses such as wounding, pathogen attack and oxidative stress. These functions might be dependent on each isozyme/isoform in each plant tissue. The polypeptide is Peroxidase 1 (Betula pendula (European white birch)).